The following is an 86-amino-acid chain: Small ribosomal subunit protein bS18c (86 aa).

This sequence belongs to the bacterial ribosomal protein bS18 family. As to quaternary structure, part of the 30S ribosomal subunit.

Its subcellular location is the plastid. The protein localises to the chloroplast. The protein is Small ribosomal subunit protein bS18c of Larix laricina (Tamarack).